The chain runs to 131 residues: Small ribosomal subunit protein uS11 (131 aa).

Belongs to the universal ribosomal protein uS11 family. As to quaternary structure, part of the 30S ribosomal subunit. Interacts with proteins S7 and S18. Binds to IF-3.

Functionally, located on the platform of the 30S subunit, it bridges several disparate RNA helices of the 16S rRNA. Forms part of the Shine-Dalgarno cleft in the 70S ribosome. This chain is Small ribosomal subunit protein uS11, found in Deinococcus radiodurans (strain ATCC 13939 / DSM 20539 / JCM 16871 / CCUG 27074 / LMG 4051 / NBRC 15346 / NCIMB 9279 / VKM B-1422 / R1).